A 434-amino-acid chain; its full sequence is Enolase (434 aa).

Gln-165 contacts (2R)-2-phosphoglycerate. Glu-207 functions as the Proton donor in the catalytic mechanism. The Mg(2+) site is built by Asp-244, Glu-291, and Asp-318. (2R)-2-phosphoglycerate is bound by residues Lys-343, Arg-372, Ser-373, and Lys-394. Lys-343 (proton acceptor) is an active-site residue.

It belongs to the enolase family. Requires Mg(2+) as cofactor.

It localises to the cytoplasm. The protein localises to the secreted. Its subcellular location is the cell surface. The catalysed reaction is (2R)-2-phosphoglycerate = phosphoenolpyruvate + H2O. Its pathway is carbohydrate degradation; glycolysis; pyruvate from D-glyceraldehyde 3-phosphate: step 4/5. Catalyzes the reversible conversion of 2-phosphoglycerate (2-PG) into phosphoenolpyruvate (PEP). It is essential for the degradation of carbohydrates via glycolysis. The protein is Enolase of Staphylococcus aureus (strain USA300 / TCH1516).